A 670-amino-acid polypeptide reads, in one-letter code: CLK4-associating serine/arginine rich protein (670 aa).

A Phosphoserine modification is found at serine 101. Disordered regions lie at residues threonine 171–aspartate 232 and glutamate 258–histidine 670. The segment covering proline 182–asparagine 214 has biased composition (acidic residues). Positions arginine 265–lysine 283 are enriched in basic residues. 2 positions are modified to phosphoserine: serine 285 and serine 294. The segment covering alanine 290–serine 313 has biased composition (basic and acidic residues). Threonine 327 carries the post-translational modification Phosphothreonine. 2 positions are modified to phosphoserine: serine 331 and serine 335. Over residues alanine 340–lysine 355 the composition is skewed to low complexity. Residues proline 356–proline 365 show a composition bias toward pro residues. The segment covering serine 378–serine 400 has biased composition (low complexity). Composition is skewed to basic residues over residues serine 411–serine 443 and arginine 481–serine 491. The span at serine 492–serine 529 shows a compositional bias: low complexity. Residue serine 543 is modified to Phosphoserine. Threonine 569 bears the Phosphothreonine mark. Positions alanine 581–serine 643 form a coiled coil. Composition is skewed to basic and acidic residues over residues phenylalanine 586 to alanine 613 and lysine 621 to tyrosine 637. The span at serine 638 to arginine 647 shows a compositional bias: low complexity. Basic residues predominate over residues serine 655–histidine 670.

It belongs to the splicing factor SR family. Probably interacts with CLK4. Post-translationally, phosphorylated in vitro by CLK4.

It is found in the nucleus. Probably functions as an alternative splicing regulator. May regulate the mRNA splicing of genes such as CLK1. May act by regulating members of the CLK kinase family. This Bos taurus (Bovine) protein is CLK4-associating serine/arginine rich protein (CLASRP).